The sequence spans 565 residues: MANPPFPLRSQVVTQGVQRSPNRAMLRAVGFRDEDFGKPIVGIANAHSTITPCNIGIQTLAERAEAALRAAGCMPQVFGTITISDGISMGTEGMKYSLVSREVIADSIETVVNGQSMDGLLAIGGCDKNMPGAMIAMARLNVPAIFVYGGTIKPGHYNGRDLTIVSAFEAVGEYSAGRISEDELLAVERHACPGAGSCGGMYTANTMSSAFEAMGMSLPYSSTMAAEDEEKAESAAQSAKVLAEAIQANIRPRDIITRQSIENAISVIMAVGGSTNAVLHFLAIAHAAEVPLTLDDFETIRARVPVLCDLKPSGRFVATDLHRAGGIPQVMKILLNHGLLHGDCLTISGQTIAEVLRDVPDEPSPDQEVIRPWHSPLYPQGHIAILKGNLAPEGAVAKISGVKTPKIAGPARVFNSEESCLQAILAGQIRPGDVVVIRYEGPKGGPGMREMLSPTSAIIGAGLGDSVGLITDGRFSGGTYGMVVGHVAPEAYVGGPIALVEEGDLITIDAPARLLHLHVSEEELARRRARWAPPEPRYKRGVLAKYAKLVSSSSLGAVTDLNLWD.

C53 is a [2Fe-2S] cluster binding site. D85 contacts Mg(2+). C126 is a binding site for [2Fe-2S] cluster. Mg(2+) is bound by residues D127 and K128. K128 carries the post-translational modification N6-carboxylysine. C198 is a [2Fe-2S] cluster binding site. Mg(2+) is bound at residue E450. S476 (proton acceptor) is an active-site residue.

Belongs to the IlvD/Edd family. As to quaternary structure, homodimer. The cofactor is [2Fe-2S] cluster. Mg(2+) is required as a cofactor.

It catalyses the reaction (2R)-2,3-dihydroxy-3-methylbutanoate = 3-methyl-2-oxobutanoate + H2O. The catalysed reaction is (2R,3R)-2,3-dihydroxy-3-methylpentanoate = (S)-3-methyl-2-oxopentanoate + H2O. It functions in the pathway amino-acid biosynthesis; L-isoleucine biosynthesis; L-isoleucine from 2-oxobutanoate: step 3/4. It participates in amino-acid biosynthesis; L-valine biosynthesis; L-valine from pyruvate: step 3/4. Functions in the biosynthesis of branched-chain amino acids. Catalyzes the dehydration of (2R,3R)-2,3-dihydroxy-3-methylpentanoate (2,3-dihydroxy-3-methylvalerate) into 2-oxo-3-methylpentanoate (2-oxo-3-methylvalerate) and of (2R)-2,3-dihydroxy-3-methylbutanoate (2,3-dihydroxyisovalerate) into 2-oxo-3-methylbutanoate (2-oxoisovalerate), the penultimate precursor to L-isoleucine and L-valine, respectively. This chain is Dihydroxy-acid dehydratase, found in Synechococcus sp. (strain JA-3-3Ab) (Cyanobacteria bacterium Yellowstone A-Prime).